A 324-amino-acid polypeptide reads, in one-letter code: Concanavalin B (324 aa).

An N-terminal signal peptide occupies residues 1-25 (MGCERKALILMVVIWIMSFWTLSLA). In terms of domain architecture, GH18 spans 30–311 (TEIAVYWGQR…TNIIRYLNAT (282 aa)). Asn-309 carries N-linked (GlcNAc...) asparagine glycosylation.

It belongs to the glycosyl hydrolase 18 family.

May act as a carbohydrate-binding protein. The protein is Concanavalin B of Canavalia ensiformis (Jack bean).